We begin with the raw amino-acid sequence, 424 residues long: CinA-like protein (424 aa).

Belongs to the CinA family.

The protein is CinA-like protein of Shewanella piezotolerans (strain WP3 / JCM 13877).